Here is a 375-residue protein sequence, read N- to C-terminus: Protein kinase MCK1 (375 aa).

An N-acetylserine modification is found at S2. One can recognise a Protein kinase domain in the interval 35–327; it reads VKEYRKIGRG…PRRILAHQFF (293 aa). ATP is bound by residues 41 to 49 and K68; that span reads IGRGAFGTV. D164 (proton acceptor) is an active-site residue. S198 is modified (phosphoserine). At Y199 the chain carries Phosphotyrosine. S202 carries the phosphoserine modification.

The protein belongs to the protein kinase superfamily. Ser/Thr protein kinase family. Phosphorylated at tyrosine and serine.

The enzyme catalyses L-seryl-[protein] + ATP = O-phospho-L-seryl-[protein] + ADP + H(+). It catalyses the reaction L-threonyl-[protein] + ATP = O-phospho-L-threonyl-[protein] + ADP + H(+). It carries out the reaction L-tyrosyl-[protein] + ATP = O-phospho-L-tyrosyl-[protein] + ADP + H(+). Its function is as follows. May be an autophosphorylating tyrosine kinase, a bifunctional (serine/tyrosine-specific) protein kinase, or a serine kinase that is a substrate for an associated tyrosine kinase. MCK1 is a transcriptional activator of IME1, it stimulates spore maturation, and play a positive regulatory role in both mitotic centromere function and activation of early meiotic gene expression. This chain is Protein kinase MCK1 (MCK1), found in Saccharomyces cerevisiae (strain ATCC 204508 / S288c) (Baker's yeast).